Here is a 1119-residue protein sequence, read N- to C-terminus: MMSSCGPLLLAVSCCLVALTSSLNLDDPNVCSHWESYSVTVQETYAHPFDQIYYTSCTDILNWFKCTQHRVSYRTAYRRGEKTMHRRKSQCCPGFYESGDICVPHCAEKCVHGRCVAPNTCQCEPGWGGADCSSACDRDHWGPHCSSRCQCKNEALCNPITGACICAPGYHGWRCEDLCDHSTYGNNCQQKCLCQNNATCHHITGECVCSPGYTGAFCEDLCPPGKHGQQCEERCPCQNGGVCHHVTGECSCPAGWGMVCGQPCPTGRFGKNCSQECQCHNGGICSPSTGQCVCSSGYTGERCQDQCQVGTYGIGCSQACRCVNGAQCYHVSGACLCEQGYTGESCEERICPDGQYGLKCDRKCPCNTNNTRSCHPMSGECSCQSGWSGLYCNETCAPGFYGEACQEVCRCQNGADCHSVSGECICAPGYKGSDCAIACPPGTYGINCTSLCSCKNGAICSPIDGSCSCQAGWHGVDCSINCPSGTWGLGCNLSCVCGNGGACNALDGKCTCTPGWRGDRCDQHCQDGTYGLDCRERCDCSHADGCHPSTGHCRCLAGWTGIHCDSVCAEGRWGPNCSLSCNCKNSASCSPDEGACECAPGFRGTTCQHICSPGVFGHRCSQACPHCVHSNGPCHHVTGQCECLPGFKGALCNEVCPSGKFGKNCGGSCTCTNNGTCSPMDGSCQCYPGWIGSDCSQPCPPGQWGPNCIHTCNCHNGAFCSAYDGECKCTAGWTGLYCTQRCPLGFYGKDCVQACQCENGADCNHISGQCTCRTGFMGRHCETKCPAGSYGYGCRQVCDCLNNSTCDHMTGTCYCNPGWKGTRCDQAGGNIAESPNSLTSAALPMDSYQIGAITGIIILVLLVLILLLLFIIYRKKQKGKESSMPSVTYTPTMRANTDYAIAESLPQTEVLPNSNYFSNPSYHTLTQCSSPPHINNIPYGKMNNNQLFVNLKNTEPRKRLSLLDHTGTLPADWKQGGSFSELGAYGVDRRYMGKSLRDLVKSLPYHASSCSLNSSENPYATIKDPPLLLTKSTECGYVEMKSPAHRDSPYAEIHSSSPANKNVYEVEPTISSVQALTNNNCNGPFCQDPYDLPKNSHIPCHYDLLPTRDSSPSPTEDSK.

Residues 1–22 (MMSSCGPLLLAVSCCLVALTSS) form the signal peptide. Residues 23 to 851 (LNLDDPNVCS…ALPMDSYQIG (829 aa)) are Extracellular-facing. The EMI domain maps to 27 to 104 (DPNVCSHWES…FYESGDICVP (78 aa)). Cystine bridges form between Cys31-Cys92, Cys57-Cys66, Cys91-Cys102, Cys102-Cys115, Cys106-Cys121, Cys123-Cys132, Cys145-Cys157, Cys151-Cys164, Cys166-Cys175, Cys188-Cys200, Cys194-Cys207, Cys209-Cys218, Cys231-Cys243, Cys237-Cys250, and Cys252-Cys260. EGF-like domains follow at residues 98–133 (SGDI…ADCS), 141–176 (WGPH…WRCE), 184–219 (YGNN…AFCE), and 227–261 (HGQQ…MVCG). Residue Asn197 is glycosylated (N-linked (GlcNAc...) asparagine). Asn272 is a glycosylation site (N-linked (GlcNAc...) asparagine). EGF-like domains lie at 274-304 (SQEC…ERCQ) and 312-347 (YGIG…ESCE). Intrachain disulfides connect Cys277/Cys285, Cys279/Cys292, Cys294/Cys303, Cys316/Cys328, Cys322/Cys335, and Cys337/Cys346. 2 N-linked (GlcNAc...) asparagine glycosylation sites follow: Asn369 and Asn393. EGF-like domains follow at residues 401 to 436 (YGEA…SDCA), 444 to 479 (YGIN…VDCS), 487 to 522 (WGLG…DRCD), 573 to 608 (WGPN…TTCQ), 616 to 653 (FGHR…ALCN), 666 to 696 (GGSC…SDCS), 709 to 739 (IHTC…LYCT), 747 to 782 (YGKD…RHCE), and 795 to 825 (RQVC…TRCD). 3 cysteine pairs are disulfide-bonded: Cys405/Cys417, Cys411/Cys424, and Cys426/Cys435. The N-linked (GlcNAc...) asparagine glycan is linked to Asn447. Disulfide bonds link Cys448–Cys460, Cys454–Cys467, Cys469–Cys478, Cys491–Cys503, Cys497–Cys510, and Cys512–Cys521. Asn492 carries N-linked (GlcNAc...) asparagine glycosylation. The N-linked (GlcNAc...) asparagine glycan is linked to Asn576. Disulfide bonds link Cys577/Cys589, Cys583/Cys596, Cys598/Cys607, Cys620/Cys634, Cys624/Cys641, Cys643/Cys652, Cys669/Cys677, Cys671/Cys684, Cys686/Cys695, Cys712/Cys720, Cys714/Cys727, Cys729/Cys738, Cys751/Cys763, Cys757/Cys770, Cys772/Cys781, Cys798/Cys806, Cys800/Cys813, and Cys815/Cys824. Asn674 carries an N-linked (GlcNAc...) asparagine glycan. N-linked (GlcNAc...) asparagine glycosylation is present at Asn803. Residues 852–872 (AITGIIILVLLVLILLLLFII) form a helical membrane-spanning segment. Residues 873-1119 (YRKKQKGKES…SSPSPTEDSK (247 aa)) are Cytoplasmic-facing.

It belongs to the MEGF family.

The protein localises to the cell membrane. Functionally, membrane receptor involved in phagocytosis by macrophages and astrocytes of apoptotic cells. Essential factor in the regulation of muscle development including myogenesis. Likely plays a key role in muscle cell proliferation, adhesion and motility. May control the balance between skeletal muscle satellite cells proliferation and differentiation through regulation of the notch signaling pathway. The sequence is that of Multiple epidermal growth factor-like domains protein 10 from Danio rerio (Zebrafish).